A 273-amino-acid polypeptide reads, in one-letter code: SUMO-1 cysteine protease S273R (273 aa).

Catalysis depends on residues histidine 168 and asparagine 187. A substrate-binding site is contributed by glutamine 226. Cysteine 232 serves as the catalytic Nucleophile.

Belongs to the peptidase C63 family.

It localises to the host cytoplasm. It is found in the virion. Its function is as follows. Cysteine protease that plays several role during infection including processing of the structural polyprotein or inhibition of the host immune response. Catalyzes the maturation of the pp220 and pp62 polyprotein precursors into core-shell proteins. Plays a role in the disruption of host pyroptosis via specific cleavage of gasdermin D/GSDMD. In addition, strongly decreases the host cGAS-STING signaling by targeting IKBKE via its enzymatic activity. Also impairs host FOXJ1-mediated antiviral effect via degradation of FOXJ1. The sequence is that of SUMO-1 cysteine protease S273R from Ornithodoros (relapsing fever ticks).